A 316-amino-acid chain; its full sequence is MSQKEQTLMTPYLQFNRHQWAALRDSVPMTLTEEEITRLKGINEDLSLEEVAEIYLPLSRLLNFYISSNLRRQAVLEQFLGTNGQRIPYIISIAGSVAVGKSTTARVLQALLSRWPEHRHVELITTDGFLHPNSVLKERGLMKKKGFPQSYDMHRLVKFVSDLKSGVPQATAPVYSHLIYDVIPNGDKTVAQPDILILEGLNVLQSGMDYPHDPHHVFVSDFVDFSIYVDAPEELLKSWYINRFLKFREGAFTDPDSYFHNYAKLSKEEAVDIATSLWNEINLMNLKENILPTRERASLIMTKSANHSVNQVRLRK.

An ATP-binding site is contributed by 95 to 102 (GSVAVGKS).

Belongs to the prokaryotic pantothenate kinase family.

Its subcellular location is the cytoplasm. It carries out the reaction (R)-pantothenate + ATP = (R)-4'-phosphopantothenate + ADP + H(+). It functions in the pathway cofactor biosynthesis; coenzyme A biosynthesis; CoA from (R)-pantothenate: step 1/5. This chain is Pantothenate kinase, found in Klebsiella pneumoniae subsp. pneumoniae (strain ATCC 700721 / MGH 78578).